The primary structure comprises 578 residues: MICOS complex subunit MIC60 (578 aa).

A mitochondrion-targeting transit peptide spans 1-28; the sequence is MIRTSVRRVVVNSNKFDVRSISNSSIRF. Residues 29–68 lie on the Mitochondrial matrix side of the membrane; it reads NVPNNQRTPPPAVRPPTSPIIVTEGGPKGGSQKQKKKFSF. Residues 69–91 traverse the membrane as a helical segment; that stretch reads AGFLFKTAFWASVVYGGTLFVAT. The Mitochondrial intermembrane segment spans residues 92-578; the sequence is KNDKVMDFIM…KIIDAESKIL (487 aa). The interval 169-191 is disordered; that stretch reads LGTSTGAKPRQAIPEGNSAPTPA. Positions 248–317 form a coiled coil; the sequence is ESLMREITEN…HEKAQMEKKL (70 aa).

The protein belongs to the MICOS complex subunit Mic60 family. Component of the mitochondrial contact site and cristae organizing system (MICOS) complex.

It is found in the mitochondrion inner membrane. Component of the MICOS complex, a large protein complex of the mitochondrial inner membrane that plays crucial roles in the maintenance of crista junctions, inner membrane architecture, and formation of contact sites to the outer membrane. Plays a role in keeping cristae membranes connected to the inner boundary membrane. Also promotes protein import via the mitochondrial intermembrane space assembly (MIA) pathway. The protein is MICOS complex subunit MIC60 (MIC60) of Debaryomyces hansenii (strain ATCC 36239 / CBS 767 / BCRC 21394 / JCM 1990 / NBRC 0083 / IGC 2968) (Yeast).